A 184-amino-acid chain; its full sequence is Peptidyl-tRNA hydrolase (184 aa).

Position 14 (Y14) interacts with tRNA. H19 serves as the catalytic Proton acceptor. Residues F60 and N62 each contribute to the tRNA site.

The protein belongs to the PTH family. In terms of assembly, monomer.

It is found in the cytoplasm. It carries out the reaction an N-acyl-L-alpha-aminoacyl-tRNA + H2O = an N-acyl-L-amino acid + a tRNA + H(+). Its function is as follows. Hydrolyzes ribosome-free peptidyl-tRNAs (with 1 or more amino acids incorporated), which drop off the ribosome during protein synthesis, or as a result of ribosome stalling. Functionally, catalyzes the release of premature peptidyl moieties from peptidyl-tRNA molecules trapped in stalled 50S ribosomal subunits, and thus maintains levels of free tRNAs and 50S ribosomes. The polypeptide is Peptidyl-tRNA hydrolase (Mesomycoplasma hyopneumoniae (strain 7448) (Mycoplasma hyopneumoniae)).